The primary structure comprises 246 residues: V-type proton ATPase subunit D 1 (246 aa).

It belongs to the V-ATPase D subunit family. As to quaternary structure, V-ATPase is a heteromultimeric enzyme made up of two complexes: the ATP-hydrolytic V1 complex and the proton translocation V0 complex. The V1 complex consists of three catalytic AB heterodimers that form a heterohexamer, three peripheral stalks each consisting of EG heterodimers, one central rotor including subunits D and F, and the regulatory subunits C and H. The proton translocation complex V0 consists of the proton transport subunit a, a ring of proteolipid subunits c9c'', rotary subunit d, subunits e and f, and the accessory subunits VhaAC45 and ATP6AP2.

Functionally, subunit of the V1 complex of vacuolar(H+)-ATPase (V-ATPase), a multisubunit enzyme composed of a peripheral complex (V1) that hydrolyzes ATP and a membrane integral complex (V0) that translocates protons. V-ATPase is responsible for acidifying and maintaining the pH of intracellular compartments and in some cell types, is targeted to the plasma membrane, where it is responsible for acidifying the extracellular environment. The polypeptide is V-type proton ATPase subunit D 1 (Vha36-1) (Drosophila melanogaster (Fruit fly)).